The chain runs to 485 residues: E3 ubiquitin-protein ligase RNF8 (485 aa).

The FHA domain maps to 38-92 (VTVGRGFGVTYQLVSKICPLMISRNHCVLKQNPEGQWTIMDNKSLNGVWLNRARL). The tract at residues 68 to 72 (QNPEG) is required for interaction with PIWIL1. Serine 157 is modified (phosphoserine). The disordered stretch occupies residues 181 to 220 (CESGQPVKSQGKGEVASTPSDNLDPKLTALEPSKTTGAPI). Residues 403–441 (CIICSEYFIEAVTLNCAHSFCSYCINEWMKRKIECPICR) form an RING-type zinc finger.

Belongs to the RNF8 family. Homodimer. Forms a E2-E3 ubiquitin ligase complex composed of the RNF8 homodimer and a E2 heterodimer of UBE2N and UBE2V2. Interacts with class III E2s, including UBE2E1, UBE2E2, and UBE2E3 and with UBE2N. Interacts with RXRA. Interacts (via FHA domain) with ATM-phosphorylated MDC1. Interacts (via FHA domain) with 'Thr-4827' phosphorylated HERC2 (via C-terminus). Interacts with PIWIL1; leading to sequester RNF8 in the cytoplasm. Interacts with WRAP53/TCAB1. As to quaternary structure, (Microbial infection) Interacts (via FHA domain) with phosphorylated human herpesvirus 1 ICP0 protein; leading to RNF8 degradation by the proteasome. Post-translationally, autoubiquitinated through 'Lys-48' and 'Lys-63' of ubiquitin. 'Lys-63' polyubiquitination is mediated by UBE2N. 'Lys-29'-type polyubiquitination is also observed, but it doesn't require its own functional RING-type zinc finger. In terms of tissue distribution, ubiquitous. In fetal tissues, highest expression in brain, thymus and liver. In adult tissues, highest levels in brain and testis, lowest levels in peripheral blood cells.

The protein resides in the nucleus. It localises to the cytoplasm. It is found in the midbody. The protein localises to the chromosome. Its subcellular location is the telomere. The catalysed reaction is S-ubiquitinyl-[E2 ubiquitin-conjugating enzyme]-L-cysteine + [acceptor protein]-L-lysine = [E2 ubiquitin-conjugating enzyme]-L-cysteine + N(6)-ubiquitinyl-[acceptor protein]-L-lysine.. It participates in protein modification; protein ubiquitination. In terms of biological role, E3 ubiquitin-protein ligase that plays a key role in DNA damage signaling via 2 distinct roles: by mediating the 'Lys-63'-linked ubiquitination of histones H2A and H2AX and promoting the recruitment of DNA repair proteins at double-strand breaks (DSBs) sites, and by catalyzing 'Lys-48'-linked ubiquitination to remove target proteins from DNA damage sites. Following DNA DSBs, it is recruited to the sites of damage by ATM-phosphorylated MDC1 and catalyzes the 'Lys-63'-linked ubiquitination of histones H2A and H2AX, thereby promoting the formation of TP53BP1 and BRCA1 ionizing radiation-induced foci (IRIF). Also controls the recruitment of UIMC1-BRCC3 (RAP80-BRCC36) and PAXIP1/PTIP to DNA damage sites. Promotes the recruitment of NBN to DNA damage sites by catalyzing 'Lys-6'-linked ubiquitination of NBN. Also recruited at DNA interstrand cross-links (ICLs) sites and catalyzes 'Lys-63'-linked ubiquitination of histones H2A and H2AX, leading to recruitment of FAAP20/C1orf86 and Fanconi anemia (FA) complex, followed by interstrand cross-link repair. H2A ubiquitination also mediates the ATM-dependent transcriptional silencing at regions flanking DSBs in cis, a mechanism to avoid collision between transcription and repair intermediates. Promotes the formation of 'Lys-63'-linked polyubiquitin chains via interactions with the specific ubiquitin-conjugating UBE2N/UBC13 and ubiquitinates non-histone substrates such as PCNA. Substrates that are polyubiquitinated at 'Lys-63' are usually not targeted for degradation. Also catalyzes the formation of 'Lys-48'-linked polyubiquitin chains via interaction with the ubiquitin-conjugating UBE2L6/UBCH8, leading to degradation of substrate proteins such as CHEK2, JMJD2A/KDM4A and KU80/XRCC5: it is still unclear how the preference toward 'Lys-48'- versus 'Lys-63'-linked ubiquitination is regulated but it could be due to RNF8 ability to interact with specific E2 specific ligases. For instance, interaction with phosphorylated HERC2 promotes the association between RNF8 and UBE2N/UBC13 and favors the specific formation of 'Lys-63'-linked ubiquitin chains. Promotes non-homologous end joining (NHEJ) by promoting the 'Lys-48'-linked ubiquitination and degradation the of KU80/XRCC5. Following DNA damage, mediates the ubiquitination and degradation of JMJD2A/KDM4A in collaboration with RNF168, leading to unmask H4K20me2 mark and promote the recruitment of TP53BP1 at DNA damage sites. Following DNA damage, mediates the ubiquitination and degradation of POLD4/p12, a subunit of DNA polymerase delta. In the absence of POLD4, DNA polymerase delta complex exhibits higher proofreading activity. In addition to its function in damage signaling, also plays a role in higher-order chromatin structure by mediating extensive chromatin decondensation. Involved in the activation of ATM by promoting histone H2B ubiquitination, which indirectly triggers histone H4 'Lys-16' acetylation (H4K16ac), establishing a chromatin environment that promotes efficient activation of ATM kinase. Required in the testis, where it plays a role in the replacement of histones during spermatogenesis. At uncapped telomeres, promotes the joining of deprotected chromosome ends by inducing H2A ubiquitination and TP53BP1 recruitment, suggesting that it may enhance cancer development by aggravating telomere-induced genome instability in case of telomeric crisis. Promotes the assembly of RAD51 at DNA DSBs in the absence of BRCA1 and TP53BP1 Also involved in class switch recombination in immune system, via its role in regulation of DSBs repair. May be required for proper exit from mitosis after spindle checkpoint activation and may regulate cytokinesis. May play a role in the regulation of RXRA-mediated transcriptional activity. Not involved in RXRA ubiquitination by UBE2E2. In Homo sapiens (Human), this protein is E3 ubiquitin-protein ligase RNF8.